Consider the following 178-residue polypeptide: ATP synthase subunit delta (178 aa).

This sequence belongs to the ATPase delta chain family. F-type ATPases have 2 components, F(1) - the catalytic core - and F(0) - the membrane proton channel. F(1) has five subunits: alpha(3), beta(3), gamma(1), delta(1), epsilon(1). F(0) has three main subunits: a(1), b(2) and c(10-14). The alpha and beta chains form an alternating ring which encloses part of the gamma chain. F(1) is attached to F(0) by a central stalk formed by the gamma and epsilon chains, while a peripheral stalk is formed by the delta and b chains.

Its subcellular location is the cell inner membrane. F(1)F(0) ATP synthase produces ATP from ADP in the presence of a proton or sodium gradient. F-type ATPases consist of two structural domains, F(1) containing the extramembraneous catalytic core and F(0) containing the membrane proton channel, linked together by a central stalk and a peripheral stalk. During catalysis, ATP synthesis in the catalytic domain of F(1) is coupled via a rotary mechanism of the central stalk subunits to proton translocation. Its function is as follows. This protein is part of the stalk that links CF(0) to CF(1). It either transmits conformational changes from CF(0) to CF(1) or is implicated in proton conduction. This Polynucleobacter necessarius subsp. necessarius (strain STIR1) protein is ATP synthase subunit delta.